The following is a 308-amino-acid chain: Low density lipoprotein receptor adapter protein 1 (308 aa).

M1 carries the N-acetylmethionine modification. A phosphoserine mark is found at S14, S186, and S202. A PID domain is found at 42 to 196 (LLEGMLFSLK…QEGGDVLGAR (155 aa)). A Clathrin box motif is present at residues 212–216 (LLDLE). Residues 249–276 (WELDDGLDEAFSRLAQSRTNPQVLDTGL) are AP-2 complex binding. Residues 257–266 (EAFSRLAQSR) carry the [DE]-X(1,2)-F-X-X-[FL]-X-X-X-R motif motif.

As to quaternary structure, interacts (via PID domain) with LDLR (via NPXY motif). Binds to soluble clathrin trimers. Interacts with AP2B1; the interaction mediates the association with the AP-2 complex. Interacts with VLDLR. Interacts with LRP2. Expressed at high levels in the kidney, liver, and placenta, with lower levels detectable in brain, heart, muscle, colon, spleen, intestine, lung, and leukocytes.

The protein localises to the cytoplasm. Functionally, adapter protein (clathrin-associated sorting protein (CLASP)) required for efficient endocytosis of the LDL receptor (LDLR) in polarized cells such as hepatocytes and lymphocytes, but not in non-polarized cells (fibroblasts). May be required for LDL binding and internalization but not for receptor clustering in coated pits. May facilitate the endocytosis of LDLR and LDLR-LDL complexes from coated pits by stabilizing the interaction between the receptor and the structural components of the pits. May also be involved in the internalization of other LDLR family members. Binds to phosphoinositides, which regulate clathrin bud assembly at the cell surface. Required for trafficking of LRP2 to the endocytic recycling compartment which is necessary for LRP2 proteolysis, releasing a tail fragment which translocates to the nucleus and mediates transcriptional repression. The polypeptide is Low density lipoprotein receptor adapter protein 1 (Homo sapiens (Human)).